We begin with the raw amino-acid sequence, 154 residues long: Transcriptional repressor NrdR (154 aa).

The interval 1-22 (MRCPFCGNDDTQVKDSRPTEDN) is disordered. A zinc finger spans residues 3-34 (CPFCGNDDTQVKDSRPTEDNSAIRRRRFCPAC). Residues 11–22 (TQVKDSRPTEDN) show a composition bias toward basic and acidic residues. One can recognise an ATP-cone domain in the interval 49–139 (LTVVKSGGSR…VYKDFREVTD (91 aa)).

This sequence belongs to the NrdR family. It depends on Zn(2+) as a cofactor.

Functionally, negatively regulates transcription of bacterial ribonucleotide reductase nrd genes and operons by binding to NrdR-boxes. The chain is Transcriptional repressor NrdR from Rhodospirillum centenum (strain ATCC 51521 / SW).